The sequence spans 1272 residues: Myosin-3 (1272 aa).

The interval 1–20 (MAVIKKGARRKDVKEPKKRS) is disordered. Residues 36–715 (VGISDLTLLS…SLFALEDMRD (680 aa)) enclose the Myosin motor domain. 129–136 (GESGAGKT) is an ATP binding site. Residue serine 357 is modified to Phosphoserine. The segment at 588–610 (ANELVETLSKAEPSYIRTIKPNQ) is actin-binding. 2 IQ domains span residues 719–739 (YNMA…RIDA) and 740–765 (AIKI…YGTK). Residues 771 to 961 (KERRSMSLLG…TIYVRRGHPA (191 aa)) form the TH1 domain. 3 disordered regions span residues 951–1015 (STIY…QKPV), 1029–1141 (YNPK…SELP), and 1217–1272 (VQFG…DDDW). The span at 980 to 1000 (IKSKKSKHKSTHKHTHSHRSH) shows a compositional bias: basic residues. Positions 1066–1078 (KKASSSHKSSSAK) are enriched in low complexity. Residues 1089–1098 (GVEKNKEPLK) show a composition bias toward basic and acidic residues. Positions 1109 to 1118 (PIPPPPPPMG) are enriched in pro residues. The SH3 domain occupies 1120–1182 (PKDPKFEAAY…PTAYMTPYKD (63 aa)). Over residues 1217 to 1236 (VQFGSATVGPTSDNQSNPVG) the composition is skewed to polar residues. Over residues 1258-1272 (ADDDDNDDGDDDDDW) the composition is skewed to acidic residues.

This sequence belongs to the TRAFAC class myosin-kinesin ATPase superfamily. Myosin family. Interacts (via myosin motor domain) with SHE4; this interaction is important for proper localization and may regulate the interaction of the motor domain with actin. Interacts (via SH3 domain) with VRP1; this interaction is required for localization to sites of polarized growth and may regulate the interaction of the tail domain with actin. Interacts (via SH3 domain) with PAN1; this interaction is important for late stages of endocytopsis. Interacts (via SH3 domain) with BBC1 and LAS17. Interacts (via C-terminal acidic tail) with ARC19 and ARC40; ARC19 and ARC40 are Arp2/3 complex subunits. Post-translationally, phosphorylation of the TEDS site (Ser-357) is required for the polarization of the actin cytoskeleton and for ligand-induced, but not for constitutive internalization of STE2. Phosphorylation probably activates the myosin-I ATPase. Ser-357 is phosphorylated by CLA4 and STE20 in vitro.

It localises to the cytoplasm. It is found in the cytoskeleton. Its subcellular location is the actin patch. Functionally, one of two redundant type-I myosins implicated in the organization of the actin cytoskeleton. Required for proper actin cytoskeleton polarization and for the internalization step in endocytosis. At the cell cortex, assembles in patch-like structures together with proteins from the actin-polymerizing machinery and promotes actin assembly. Functions redundantly with LAS17 as actin nucleation-promoting factor (NPF) for the Arp2/3 complex. Motor domain phosphorylation by PAK kinases CLA4 and STE20 promotes CDC42-regulated actin assembly. Functions together with the NPF PAN1 in late stages of endocytosis. Motor domain phosphorylation by PDK1 kinases PKH1 and PKH2, and by SGK kinases YPK1 and YPK2, promotes ligand-induced, but not constitutive endocytosis of the G protein-coupled receptor STE2. The protein is Myosin-3 (MYO3) of Saccharomyces cerevisiae (strain ATCC 204508 / S288c) (Baker's yeast).